Reading from the N-terminus, the 474-residue chain is Protein anachronism (474 aa).

The signal sequence occupies residues 1–33 (MASAMRGEKCERSRIRELVLILSLITMAGDSRA). Residues asparagine 54, asparagine 62, asparagine 73, asparagine 116, and asparagine 144 are each glycosylated (N-linked (GlcNAc...) asparagine). Positions 173–195 (NPGQTREHNPGQASTQPISTENP) are disordered. A compositionally biased stretch (polar residues) spans 183 to 195 (GQASTQPISTENP). Asparagine 342 is a glycosylation site (N-linked (GlcNAc...) asparagine). Positions 359–372 (FIESTTSNSPTIDN) are enriched in polar residues. The disordered stretch occupies residues 359–474 (FIESTTSNSP…HHRIPAHKQE (116 aa)). 2 stretches are compositionally biased toward basic residues: residues 390–400 (LVHHRRHHHNH) and 437–474 (NHHR…HKQE).

In terms of tissue distribution, synthesized in some glial cells and secreted.

It localises to the secreted. Negatively regulates proliferation of neuronal precursor cells, thereby controlling the timing of postembryonic neurogenesis. The polypeptide is Protein anachronism (ana) (Drosophila melanogaster (Fruit fly)).